We begin with the raw amino-acid sequence, 44 residues long: Small, acid-soluble spore protein P (44 aa).

Positions 1 to 44 are disordered; the sequence is MSQTMSKNNREAKEKKGQPEPLSGSHKVKNRNHSRQKHHAHHDM. Basic and acidic residues predominate over residues 8-18; that stretch reads NNREAKEKKGQ. Over residues 26–44 the composition is skewed to basic residues; it reads HKVKNRNHSRQKHHAHHDM.

The protein belongs to the SspP family.

The protein resides in the spore core. This Bacillus cereus (strain ATCC 10987 / NRS 248) protein is Small, acid-soluble spore protein P.